The primary structure comprises 490 residues: 53 kDa membrane antigen A (490 aa).

Positions 1–16 (MKKKLFFALLVLILSS) are cleaved as a signal peptide. The N-palmitoyl cysteine moiety is linked to residue Cys-17. Residue Cys-17 is the site of S-diacylglycerol cysteine attachment.

The protein resides in the cell membrane. The chain is 53 kDa membrane antigen A (tdpA) from Treponema denticola.